The following is a 185-amino-acid chain: Ribosome-recycling factor (185 aa).

The protein belongs to the RRF family.

It localises to the cytoplasm. Responsible for the release of ribosomes from messenger RNA at the termination of protein biosynthesis. May increase the efficiency of translation by recycling ribosomes from one round of translation to another. This is Ribosome-recycling factor from Bacillus cereus (strain G9842).